The following is an 882-amino-acid chain: Lon protease homolog, mitochondrial (882 aa).

The transit peptide at 1–34 (MIHVLKSRSTLLTASSIVRTSVGSSSRYSQTRTY) directs the protein to the mitochondrion. One can recognise a Lon N-terminal domain in the interval 68 to 281 (TLGLPLVSRP…KALVLLNRER (214 aa)). 435–442 (GPPGTGKT) lines the ATP pocket. One can recognise a Lon proteolytic domain in the interval 687-878 (PLPHGIVMGL…DKVYEVAFSS (192 aa)). Catalysis depends on residues Ser-784 and Lys-827.

It belongs to the peptidase S16 family. Homohexamer or homoheptamer. Organized in a ring with a central cavity.

It is found in the mitochondrion matrix. The catalysed reaction is Hydrolysis of proteins in presence of ATP.. Its function is as follows. ATP-dependent serine protease that mediates the selective degradation of misfolded, unassembled or oxidatively damaged polypeptides as well as certain short-lived regulatory proteins in the mitochondrial matrix. May also have a chaperone function in the assembly of inner membrane protein complexes. Participates in the regulation of mitochondrial gene expression and in the maintenance of the integrity of the mitochondrial genome. Binds to mitochondrial DNA in a site-specific manner. The chain is Lon protease homolog, mitochondrial from Phaeodactylum tricornutum (strain CCAP 1055/1).